The sequence spans 329 residues: Ribosomal RNA small subunit methyltransferase C (329 aa).

The protein belongs to the methyltransferase superfamily. RsmC family. In terms of assembly, monomer.

The protein resides in the cytoplasm. The catalysed reaction is guanosine(1207) in 16S rRNA + S-adenosyl-L-methionine = N(2)-methylguanosine(1207) in 16S rRNA + S-adenosyl-L-homocysteine + H(+). Specifically methylates the guanine in position 1207 of 16S rRNA in the 30S particle. In Actinobacillus pleuropneumoniae serotype 3 (strain JL03), this protein is Ribosomal RNA small subunit methyltransferase C.